The sequence spans 528 residues: 2-isopropylmalate synthase (528 aa).

The region spanning 12–279 (IRIFDTTLRD…DSSINTPRIV (268 aa)) is the Pyruvate carboxyltransferase domain. Positions 21, 214, 216, and 250 each coordinate Mn(2+). The regulatory domain stretch occupies residues 401 to 528 (RLASMTISDV…STDVPTPATA (128 aa)).

Belongs to the alpha-IPM synthase/homocitrate synthase family. LeuA type 1 subfamily. In terms of assembly, homodimer. Mn(2+) is required as a cofactor.

It localises to the cytoplasm. The enzyme catalyses 3-methyl-2-oxobutanoate + acetyl-CoA + H2O = (2S)-2-isopropylmalate + CoA + H(+). It participates in amino-acid biosynthesis; L-leucine biosynthesis; L-leucine from 3-methyl-2-oxobutanoate: step 1/4. Its function is as follows. Catalyzes the condensation of the acetyl group of acetyl-CoA with 3-methyl-2-oxobutanoate (2-ketoisovalerate) to form 3-carboxy-3-hydroxy-4-methylpentanoate (2-isopropylmalate). This Stenotrophomonas maltophilia (strain K279a) protein is 2-isopropylmalate synthase.